The primary structure comprises 302 residues: uncharacterized protein (302 aa).

The active site involves Glu47.

It belongs to the PhzF family.

This is an uncharacterized protein from Mesorhizobium japonicum (strain LMG 29417 / CECT 9101 / MAFF 303099) (Mesorhizobium loti (strain MAFF 303099)).